The sequence spans 906 residues: MERDGEQAGQGPRHGPAGNGRELESPAAASLLAPMDLGEEPLEKAERARTAKDPNTYKVLSLVLSVCVLTTILGCIFGLKPSCAKEVKSCKGRCFERTFSNCRCDAACVSLGNCCLDFQETCVEPTHIWTCNKFRCGEKRLSRFVCSCADDCKAHNDCCINYSSVCQEKKSWVEEACETIDAPQCPAEFESPPTLLFSLDGFRAEYLHTWGGLLPVISKLKNCGTYTKNMRPVYPTKTFPNHYSIVTGLYPESHGIIDNKMYDPKMNASFSLKSKEKFNPLWYKGQPIWVTANHQEVRSGTYFWPGSDVEIDGILPDIYKVYNGSVPFEERILAVLEWLQLPSYERPHFYTLYLEEPDSSGHSHGPVSSEVIKALQKVDHIVGMLMDGLKDLGLDKCLNLILISDHGMEQGSCKKYVYLNKYLGDVNNVKVVYGPAARLRPTEVPETYYSFNYEALAKNLSCRETNQHFRPYLKHFLPKRLHFAKNDRIEPLTFYLDPQWQLALNPSERKYCGSGFHGSDNLFSNMQALFIGYGPAFKHGAEVDSFENIEVYNLMCDLLGLIPAPNNESHGSLNHLLKKPIYTPSHPKEESFLSQCPIKSVSSDLGCTCDPSIVPIMDFEKQFNLTTDAVEDVYSMTVPNGRPRNLQKQHRVCLLHQQQFLTGYSLDLLMPLWTSYTFLSNDQFSTDDFSNCLYQDLRIPLSPMHKCSYYKSTSKLSYGFLTPPRLNRVSRQIYSEALLTSNIVPMYQSFQVIWQYLHDTVLRRYAQERNGVNVVSGPVFDFDYDGRYDSSEILKQNTRVIRSQENLIPTHFFIVLTSCKQLSESPLKCTALESSAFLLPHRPDNIESCTHGKQESAWVEELLALHRARVTDVELITGLSFYQDRQESVSELLRLKTHLPIFSQED.

The segment at 1 to 25 is disordered; sequence MERDGEQAGQGPRHGPAGNGRELES. The Cytoplasmic portion of the chain corresponds to 1 to 58; the sequence is MERDGEQAGQGPRHGPAGNGRELESPAAASLLAPMDLGEEPLEKAERARTAKDPNTYK. Ser-25 carries the phosphoserine modification. Residues 27-34 carry the Di-leucine motif motif; it reads AAASLLAP. The chain crosses the membrane as a helical; Signal-anchor for type II membrane protein span at residues 59-79; sequence VLSLVLSVCVLTTILGCIFGL. The Extracellular segment spans residues 80 to 906; that stretch reads KPSCAKEVKS…THLPIFSQED (827 aa). SMB domains are found at residues 86–126 and 127–170; these read EVKS…VEPT and HIWT…QEKK. 10 disulfide bridges follow: Cys-90-Cys-104, Cys-94-Cys-122, Cys-102-Cys-115, Cys-108-Cys-114, Cys-131-Cys-148, Cys-136-Cys-166, Cys-146-Cys-159, Cys-152-Cys-158, Cys-177-Cys-223, and Cys-185-Cys-397. Asn-161 carries N-linked (GlcNAc...) asparagine glycosylation. Positions 173-573 are phosphodiesterase; that stretch reads VEEACETIDA…APNNESHGSL (401 aa). Residues Asp-200, Thr-238, and Asn-259 each coordinate AMP. Residues Asp-200 and Thr-238 each coordinate Zn(2+). Thr-238 serves as the catalytic AMP-threonine intermediate. CMP is bound by residues Thr-238 and Asn-259. 2 residues coordinate dTMP: Thr-238 and Asn-259. GMP contacts are provided by Thr-238 and Asn-259. Residue Thr-238 is modified to Phosphothreonine. Asn-267 carries N-linked (GlcNAc...) asparagine glycosylation. Residues Leu-272, Lys-277, and Tyr-322 each coordinate GMP. Residues Lys-277 and Tyr-322 each contribute to the AMP site. 2 residues coordinate CMP: Lys-277 and Tyr-322. DTMP is bound at residue Tyr-322. Residue Asn-323 is glycosylated (N-linked (GlcNAc...) asparagine). AMP is bound at residue Asp-358. Zn(2+) is bound by residues Asp-358, His-362, Asp-405, and His-406. Asp-358 is a CMP binding site. Asp-358 contacts dTMP. GMP is bound at residue Asp-358. His-362 lines the 2',3'-cGAMP pocket. An AMP-binding site is contributed by His-406. Residue His-406 participates in CMP binding. His-406 is a binding site for dTMP. Residue His-406 participates in GMP binding. Disulfide bonds link Cys-413/Cys-512, Cys-462/Cys-849, Cys-596/Cys-653, Cys-607/Cys-707, Cys-609/Cys-692, and Cys-819/Cys-829. The N-linked (GlcNAc...) asparagine glycan is linked to Asn-459. 2',3'-cGAMP is bound at residue Ser-514. His-517 is an AMP binding site. His-517 is a binding site for Zn(2+). A CMP-binding site is contributed by His-517. His-517 contacts dTMP. GMP is bound at residue His-517. 2 N-linked (GlcNAc...) asparagine glycosylation sites follow: Asn-567 and Asn-624. The segment at 579–628 is linker; the sequence is KPIYTPSHPKEESFLSQCPIKSVSSDLGCTCDPSIVPIMDFEKQFNLTTD. A nuclease-like domain region spans residues 635–906; it reads SMTVPNGRPR…THLPIFSQED (272 aa). Ca(2+) is bound by residues Asp-781, Asp-783, Asp-785, Arg-787, and Asp-789.

This sequence belongs to the nucleotide pyrophosphatase/phosphodiesterase family. In terms of assembly, ectonucleotide pyrophosphatase/phosphodiesterase family member 1: Homodimer. Ectonucleotide pyrophosphatase/phosphodiesterase family member 1: Interacts with INSR; leading to inhibit INSR autophosphorylation and subsequent activation of INSR kinase activity. Ectonucleotide pyrophosphatase/phosphodiesterase family member 1, secreted form: Monomeric. The cofactor is Zn(2+). In terms of processing, the secreted form is produced through cleavage at Lys-85 by intracellular processing.

The protein localises to the cell membrane. It localises to the basolateral cell membrane. Its subcellular location is the secreted. It catalyses the reaction Hydrolytically removes 5'-nucleotides successively from the 3'-hydroxy termini of 3'-hydroxy-terminated oligonucleotides.. The enzyme catalyses a ribonucleoside 5'-triphosphate + H2O = a ribonucleoside 5'-phosphate + diphosphate + H(+). The catalysed reaction is ATP + H2O = AMP + diphosphate + H(+). It carries out the reaction UTP + H2O = UMP + diphosphate + H(+). It catalyses the reaction GTP + H2O = GMP + diphosphate + H(+). The enzyme catalyses CTP + H2O = CMP + diphosphate + H(+). The catalysed reaction is 2',3'-cGAMP + 2 H2O = GMP + AMP + 2 H(+). It carries out the reaction P(1),P(4)-bis(5'-adenosyl) tetraphosphate + H2O = AMP + ATP + 2 H(+). It catalyses the reaction 3',5'-cyclic AMP + H2O = AMP + H(+). At low concentrations of ATP, a phosphorylated intermediate is formed which inhibits further hydrolysis. Functionally, nucleotide pyrophosphatase that generates diphosphate (PPi) and functions in bone mineralization and soft tissue calcification by regulating pyrophosphate levels. PPi inhibits bone mineralization and soft tissue calcification by binding to nascent hydroxyapatite crystals, thereby preventing further growth of these crystals. Preferentially hydrolyzes ATP, but can also hydrolyze other nucleoside 5' triphosphates such as GTP, CTP and UTP to their corresponding monophosphates with release of pyrophosphate, as well as diadenosine polyphosphates, and also 3',5'-cAMP to AMP. May also be involved in the regulation of the availability of nucleotide sugars in the endoplasmic reticulum and Golgi, and the regulation of purinergic signaling. Inhibits ectopic joint calcification and maintains articular chondrocytes by repressing hedgehog signaling; it is however unclear whether hedgehog inhibition is direct or indirect. Appears to modulate insulin sensitivity. Also involved in melanogenesis. Also able to hydrolyze 2',3'-cGAMP (cyclic GMP-AMP), a second messenger that activates TMEM173/STING and triggers type-I interferon production. 2',3'-cGAMP degradation takes place in the lumen or extracellular space, and not in the cytosol where it is produced; the role of 2',3'-cGAMP hydrolysis is therefore unclear. Not able to hydrolyze the 2',3'-cGAMP linkage isomer 3'-3'-cGAMP. In Rattus norvegicus (Rat), this protein is Ectonucleotide pyrophosphatase/phosphodiesterase family member 1.